Consider the following 377-residue polypeptide: Glycine oxidase (377 aa).

FAD contacts are provided by residues 14–15 (VI), 34–35 (EK), 42–43 (AS), 47–49 (AGM), and Val-180. The substrate site is built by Arg-309 and Arg-336. 334 to 340 (HYRNGIL) lines the FAD pocket.

Belongs to the DAO family. ThiO subfamily. In terms of assembly, homotetramer. Requires FAD as cofactor.

The enzyme catalyses glycine + O2 + H2O = glyoxylate + H2O2 + NH4(+). It carries out the reaction N-ethylglycine + O2 + H2O = ethylamine + glyoxylate + H2O2. It catalyses the reaction sarcosine + O2 + H2O = methylamine + glyoxylate + H2O2. The catalysed reaction is D-alanine + O2 + H2O = pyruvate + H2O2 + NH4(+). Its pathway is cofactor biosynthesis; thiamine diphosphate biosynthesis. With respect to regulation, is inhibited at high substrate concentration. Functionally, catalyzes the FAD-dependent oxidative deamination of various amines and D-amino acids to yield the corresponding alpha-keto acids, ammonia/amine, and hydrogen peroxide. Oxidizes glycine, sarcosine (N-methylglycine), N-ethylglycine, D-proline, D-alanine, glycine-ethyl ester, and some other D-amino acids. Does not act on L-proline. Is essential for thiamine biosynthesis since the oxidation of glycine catalyzed by ThiO generates the glycine imine intermediate (dehydroglycine) required for the biosynthesis of the thiazole ring of thiamine pyrophosphate. In Geobacillus kaustophilus (strain HTA426), this protein is Glycine oxidase.